Reading from the N-terminus, the 657-residue chain is Probable Xaa-Pro aminopeptidase P (657 aa).

Mn(2+)-binding residues include D453, D464, E562, and E576.

Belongs to the peptidase M24B family. Mn(2+) serves as cofactor.

It carries out the reaction Release of any N-terminal amino acid, including proline, that is linked to proline, even from a dipeptide or tripeptide.. Its function is as follows. Catalyzes the removal of a penultimate prolyl residue from the N-termini of peptides. In Talaromyces marneffei (strain ATCC 18224 / CBS 334.59 / QM 7333) (Penicillium marneffei), this protein is Probable Xaa-Pro aminopeptidase P (ampp).